The sequence spans 222 residues: Homing endonuclease I-ApeI (222 aa).

As to quaternary structure, probably functions as a monomer. Mg(2+) is required as a cofactor. Requires Mn(2+) as cofactor.

Endonuclease involved in 16S rRNA intron I-alpha homing. Recognizes the minimal target 5'-GCAAGGCTGAAACTTAAAGG-3'; generates 4 base 3' protruding ends 5'-AAAC-3' and 5'-GTTT-3'. The chain is Homing endonuclease I-ApeI (apeI) from Aeropyrum pernix (strain ATCC 700893 / DSM 11879 / JCM 9820 / NBRC 100138 / K1).